A 264-amino-acid polypeptide reads, in one-letter code: Small ribosomal subunit protein eS1 (264 aa).

N6-acetyllysine; alternate is present on Lys-34. Lys-34 is covalently cross-linked (Glycyl lysine isopeptide (Lys-Gly) (interchain with G-Cter in SUMO2); alternate). Lys-56 is modified (N6-acetyllysine). Tyr-155 bears the ADP-ribosyltyrosine mark. Positions 232–264 are disordered; the sequence is HGEGSSSGKATGDETGAKVERADGYEPPVQESV. Residues Ser-236 and Ser-237 each carry the phosphoserine modification. The segment covering 242–255 has biased composition (basic and acidic residues); that stretch reads TGDETGAKVERADG. Lys-249 bears the N6-acetyllysine; alternate mark. Lys-249 is covalently cross-linked (Glycyl lysine isopeptide (Lys-Gly) (interchain with G-Cter in SUMO2); alternate). Residue Tyr-256 is modified to Phosphotyrosine. The residue at position 263 (Ser-263) is a Phosphoserine.

It belongs to the eukaryotic ribosomal protein eS1 family. As to quaternary structure, component of the small ribosomal subunit. Mature ribosomes consist of a small (40S) and a large (60S) subunit. The 40S subunit contains about 33 different proteins and 1 molecule of RNA (18S). The 60S subunit contains about 49 different proteins and 3 molecules of RNA (28S, 5.8S and 5S). Identified in a IGF2BP1-dependent mRNP granule complex containing untranslated mRNAs. Binds with high affinity to IPO4. Interacts with DDIT3. Part of the small subunit (SSU) processome, composed of more than 70 proteins and the RNA chaperone small nucleolar RNA (snoRNA) U3. In terms of processing, ADP-ribosylated at Tyr-155 by PARP1 in presence of HPF1.

It localises to the cytoplasm. The protein localises to the nucleus. Its subcellular location is the nucleolus. In terms of biological role, component of the small ribosomal subunit. The ribosome is a large ribonucleoprotein complex responsible for the synthesis of proteins in the cell. Part of the small subunit (SSU) processome, first precursor of the small eukaryotic ribosomal subunit. During the assembly of the SSU processome in the nucleolus, many ribosome biogenesis factors, an RNA chaperone and ribosomal proteins associate with the nascent pre-rRNA and work in concert to generate RNA folding, modifications, rearrangements and cleavage as well as targeted degradation of pre-ribosomal RNA by the RNA exosome. May play a role during erythropoiesis through regulation of transcription factor DDIT3. This chain is Small ribosomal subunit protein eS1, found in Bos taurus (Bovine).